Here is a 251-residue protein sequence, read N- to C-terminus: Transmembrane ascorbate-dependent reductase CYB561 (251 aa).

Methionine 1 carries the N-acetylmethionine modification. Residues 1–16 are Cytoplasmic-facing; that stretch reads MEGGAAAATPTALPYY. A helical membrane pass occupies residues 17–37; that stretch reads VAFSQLLGLTLVAMTGAWLGL. Residues 19–220 enclose the Cytochrome b561 domain; the sequence is FSQLLGLTLV…FGGAVLYILT (202 aa). The Vesicular segment spans residues 38-51; it reads YRGGIAWESDLQFN. Residues 52–72 traverse the membrane as a helical segment; that stretch reads AHPLCMVIGLIFLQGNALLVY. Heme b is bound by residues histidine 53, arginine 73, and lysine 80. The Cytoplasmic portion of the chain corresponds to 73–85; that stretch reads RVFRNEAKRTTKV. Positions 80 and 84 each coordinate L-ascorbate. Residues 86 to 106 form a helical membrane-spanning segment; the sequence is LHGLLHIFALVIALVGLVAVF. Heme b contacts are provided by residues histidine 87, 116–119, and histidine 121; that span reads DLYS. The Vesicular portion of the chain corresponds to 107–124; that stretch reads DYHRKKGYADLYSLHSWC. A helical transmembrane segment spans residues 125–145; sequence GILVFVLYFVQWLVGFSFFLF. The Cytoplasmic segment spans residues 146-158; it reads PGASFSLRSRYRP. Arginine 153 is an L-ascorbate binding site. Residues 159–179 traverse the membrane as a helical segment; that stretch reads QHIFFGATIFLLSVGTALLGL. Heme b-binding residues include histidine 160 and glutamate 181. Residues 180–198 are Vesicular-facing; that stretch reads KEALLFNLGGKYSAFEPEG. A helical transmembrane segment spans residues 199 to 219; it reads VLANVLGLLLACFGGAVLYIL. At 220 to 251 the chain is on the cytoplasmic side; it reads TRADWKRPSQAEEQALSMDFKTLTEGDSPGSQ. Lysine 225 provides a ligand contact to heme b. Serine 247 carries the phosphoserine modification.

It depends on heme b as a cofactor. Expressed in many tissues, in particular the brain especially in the cortex and hippocampus.

It localises to the cytoplasmic vesicle. The protein resides in the secretory vesicle. It is found in the chromaffin granule membrane. The enzyme catalyses monodehydro-L-ascorbate radical(out) + L-ascorbate(in) = monodehydro-L-ascorbate radical(in) + L-ascorbate(out). Functionally, transmembrane reductase that uses ascorbate as an electron donor in the cytoplasm and transfers electrons across membranes to reduce monodehydro-L-ascorbate radical in the lumen of secretory vesicles. It is therefore involved the regeneration and homeostasis within secretory vesicles of ascorbate which in turn provides reducing equivalents needed to support the activity of intravesicular enzymes. The protein is Transmembrane ascorbate-dependent reductase CYB561 of Homo sapiens (Human).